The chain runs to 155 residues: Endoribonuclease YbeY (155 aa).

Zn(2+) is bound by residues H120, H124, and H130.

It belongs to the endoribonuclease YbeY family. Requires Zn(2+) as cofactor.

Its subcellular location is the cytoplasm. Its function is as follows. Single strand-specific metallo-endoribonuclease involved in late-stage 70S ribosome quality control and in maturation of the 3' terminus of the 16S rRNA. In Staphylococcus aureus (strain MSSA476), this protein is Endoribonuclease YbeY.